Consider the following 317-residue polypeptide: MGLQGPAKVAIIGTGYVGSSTAFALLFSPLVKEMVLVDVNHAKAEGEAMDLAHAATLIRPVEVYAGRPADCAGSRIVIFTAGANQQPGQTRLDLIHRNTAIVRQALPEILHYCPEALVLMVANPVDILTYVAWKISGLPENRVLGSGTVLDSARFRHLLSRHYRVDPRNIHAYVIGEHGDTEVPVWSLANVAGVDLEEFYLMDGMREEEAFRVEISHQVREAAYEIIERKGVTSYGVALALSRIIECILRNEHSVLTISSVIRDLYGIDGEVALSLPCLVGNEGREKVLAIPLVAREKAALKHSATTLQQLIAQLSL.

NAD(+)-binding positions include V17, D38, K43, and 82-83 (GA). Substrate is bound by residues Q85, R91, and 123 to 126 (NPVD). NAD(+) is bound by residues 121–123 (VAN) and S146. 151–154 (DSAR) provides a ligand contact to substrate. Residues R156 and H171 each coordinate beta-D-fructose 1,6-bisphosphate. Catalysis depends on H178, which acts as the Proton acceptor. The residue at position 224 (Y224) is a Phosphotyrosine. T233 is a substrate binding site.

The protein belongs to the LDH/MDH superfamily. LDH family. Homotetramer.

The protein resides in the cytoplasm. It carries out the reaction (S)-lactate + NAD(+) = pyruvate + NADH + H(+). Its pathway is fermentation; pyruvate fermentation to lactate; (S)-lactate from pyruvate: step 1/1. Allosterically activated by fructose 1,6-bisphosphate (FBP). In terms of biological role, catalyzes the conversion of lactate to pyruvate. The polypeptide is L-lactate dehydrogenase (Moorella thermoacetica (strain ATCC 39073 / JCM 9320)).